The primary structure comprises 124 residues: Prefoldin subunit beta (124 aa).

It belongs to the prefoldin subunit beta family. As to quaternary structure, heterohexamer of two alpha and four beta subunits.

Its subcellular location is the cytoplasm. Molecular chaperone capable of stabilizing a range of proteins. Seems to fulfill an ATP-independent, HSP70-like function in archaeal de novo protein folding. The polypeptide is Prefoldin subunit beta (Pyrobaculum arsenaticum (strain DSM 13514 / JCM 11321 / PZ6)).